The primary structure comprises 696 residues: Gametogenetin-binding protein 2 (696 aa).

2 positions are modified to phosphoserine: serine 360 and serine 602.

As to quaternary structure, interacts with isoform 1 of GGN. As to expression, testis-specific.

It is found in the cytoplasmic vesicle. Functionally, may be involved in spermatogenesis. The protein is Gametogenetin-binding protein 2 (Ggnbp2) of Mus musculus (Mouse).